The following is a 501-amino-acid chain: Sugar phosphate exchanger 3 (501 aa).

Residues 20 to 40 (CTHHHIVVFLLTFFSYSLLHA) form a helical membrane-spanning segment. N62 carries N-linked (GlcNAc...) asparagine glycosylation. The next 5 helical transmembrane spans lie at 87–107 (TLFLGTLDTIFLFSYAVGLFV), 119–139 (WVLSFGMCSSALVVFFFGTLT), 153–173 (LWVVNGLLQSTGWPCVVAVMG), 183–203 (FVFGLWSACASVGNILGAFLA), and 214–234 (AFLVTASVQFAGGVIVFCGLL). N273 carries N-linked (GlcNAc...) asparagine glycosylation. A run of 6 helical transmembrane segments spans residues 298–320 (GVVLYSLAYACLKLVNYSFFFWL), 340–360 (IWYDVGGIIGGTIQGLISDVL), 364–384 (APVLAISLLFAVGSLFGYSRS), 393–413 (VIMAITGFFIGGPSNMISSAI), 435–455 (GIVDGTGSIGAAVGQYLVSLI), and 459–479 (LGWMWVFYFFILMASSTILFI).

Belongs to the major facilitator superfamily. Organophosphate:Pi antiporter (OPA) (TC 2.A.1.4) family.

It localises to the endoplasmic reticulum membrane. The protein resides in the lysosome membrane. Its function is as follows. Unlike the other SLC37 members, seems to lack glucose-6-phosphate antiporter activity. The sequence is that of Sugar phosphate exchanger 3 (SLC37A3) from Gallus gallus (Chicken).